A 148-amino-acid chain; its full sequence is Large ribosomal subunit protein uL11 (148 aa).

The segment at 89 to 108 (EKKKGSGAHKPGKEKVGQVT) is disordered.

It belongs to the universal ribosomal protein uL11 family. As to quaternary structure, part of the ribosomal stalk of the 50S ribosomal subunit. Interacts with L10 and the large rRNA to form the base of the stalk. L10 forms an elongated spine to which L12 dimers bind in a sequential fashion forming a multimeric L10(L12)X complex. One or more lysine residues are methylated.

Its function is as follows. Forms part of the ribosomal stalk which helps the ribosome interact with GTP-bound translation factors. This is Large ribosomal subunit protein uL11 from Anaeromyxobacter sp. (strain Fw109-5).